The following is a 334-amino-acid chain: Ornithine carbamoyltransferase (334 aa).

Residues 56–59 (STRT), Gln-83, Arg-107, and 134–137 (HPTQ) each bind carbamoyl phosphate. L-ornithine is bound by residues Asn-168, Asp-232, and 236 to 237 (SM). Carbamoyl phosphate-binding positions include 274–275 (CL) and Arg-320.

It belongs to the aspartate/ornithine carbamoyltransferase superfamily. OTCase family. Homotrimer.

Its subcellular location is the cytoplasm. The enzyme catalyses carbamoyl phosphate + L-ornithine = L-citrulline + phosphate + H(+). Its pathway is amino-acid biosynthesis; L-arginine biosynthesis; L-arginine from L-ornithine and carbamoyl phosphate: step 1/3. Its function is as follows. Reversibly catalyzes the transfer of the carbamoyl group from carbamoyl phosphate (CP) to the N(epsilon) atom of ornithine (ORN) to produce L-citrulline. This is Ornithine carbamoyltransferase (argI) from Salmonella typhimurium (strain LT2 / SGSC1412 / ATCC 700720).